The primary structure comprises 67 residues: Small ribosomal subunit protein eS27 (67 aa).

Positions 22, 25, 41, and 44 each coordinate Zn(2+). The C4-type zinc-finger motif lies at 22–44 (CPDCGNEQVTFSHAAMVVRCLVC).

Belongs to the eukaryotic ribosomal protein eS27 family. As to quaternary structure, part of the 30S ribosomal subunit. Zn(2+) serves as cofactor.

This chain is Small ribosomal subunit protein eS27, found in Pyrobaculum calidifontis (strain DSM 21063 / JCM 11548 / VA1).